A 353-amino-acid chain; its full sequence is tRNA U34 carboxymethyltransferase (353 aa).

Carboxy-S-adenosyl-L-methionine-binding positions include K101, W119, K124, G144, 166 to 168, 207 to 208, M227, Y231, and R346; these read DPS and LE.

It belongs to the class I-like SAM-binding methyltransferase superfamily. CmoB family. In terms of assembly, homotetramer.

The catalysed reaction is carboxy-S-adenosyl-L-methionine + 5-hydroxyuridine(34) in tRNA = 5-carboxymethoxyuridine(34) in tRNA + S-adenosyl-L-homocysteine + H(+). Its function is as follows. Catalyzes carboxymethyl transfer from carboxy-S-adenosyl-L-methionine (Cx-SAM) to 5-hydroxyuridine (ho5U) to form 5-carboxymethoxyuridine (cmo5U) at position 34 in tRNAs. In Psychrobacter sp. (strain PRwf-1), this protein is tRNA U34 carboxymethyltransferase.